The sequence spans 250 residues: MQNLSLSQDVLPKHIAVIMDGNGRWAKAQGKPRVFGHKNGVAAVRKTISTSARLGIKAVTLFAFSSENWRRPEEEVGVLMELFMTVLSTEIKKLHKNNLRLRVIGDKSRFSERLQTKIAQAEQLTASNTGMVVNIAANYGGQWDILQATQALAEKVTQGELQPSDIDEDVFKQHLTMADLPDVDLLIRTSGECRISNFMLWQLAYAEMYFTPVFWPEFDENCLIEAVTWFVNRERRFGCTGEQVKALMEN.

Residue Asp20 is part of the active site. Asp20 serves as a coordination point for Mg(2+). Residues 21–24, Trp25, Arg33, His37, and 65–67 each bind substrate; these read GNGR and SSE. Asn68 acts as the Proton acceptor in catalysis. Residues Trp69, Arg71, Arg188, and 194–196 contribute to the substrate site; that span reads RIS. Position 207 (Glu207) interacts with Mg(2+).

It belongs to the UPP synthase family. As to quaternary structure, homodimer. Mg(2+) serves as cofactor.

It catalyses the reaction 8 isopentenyl diphosphate + (2E,6E)-farnesyl diphosphate = di-trans,octa-cis-undecaprenyl diphosphate + 8 diphosphate. Catalyzes the sequential condensation of isopentenyl diphosphate (IPP) with (2E,6E)-farnesyl diphosphate (E,E-FPP) to yield (2Z,6Z,10Z,14Z,18Z,22Z,26Z,30Z,34E,38E)-undecaprenyl diphosphate (di-trans,octa-cis-UPP). UPP is the precursor of glycosyl carrier lipid in the biosynthesis of bacterial cell wall polysaccharide components such as peptidoglycan and lipopolysaccharide. The chain is Ditrans,polycis-undecaprenyl-diphosphate synthase ((2E,6E)-farnesyl-diphosphate specific) from Vibrio cholerae serotype O1 (strain ATCC 39315 / El Tor Inaba N16961).